Here is a 233-residue protein sequence, read N- to C-terminus: 2,3,4,5-tetrahydropyridine-2,6-dicarboxylate N-acetyltransferase (233 aa).

The protein belongs to the transferase hexapeptide repeat family. DapH subfamily.

It catalyses the reaction (S)-2,3,4,5-tetrahydrodipicolinate + acetyl-CoA + H2O = L-2-acetamido-6-oxoheptanedioate + CoA. It functions in the pathway amino-acid biosynthesis; L-lysine biosynthesis via DAP pathway; LL-2,6-diaminopimelate from (S)-tetrahydrodipicolinate (acetylase route): step 1/3. In terms of biological role, catalyzes the transfer of an acetyl group from acetyl-CoA to tetrahydrodipicolinate. This is 2,3,4,5-tetrahydropyridine-2,6-dicarboxylate N-acetyltransferase from Leuconostoc mesenteroides subsp. mesenteroides (strain ATCC 8293 / DSM 20343 / BCRC 11652 / CCM 1803 / JCM 6124 / NCDO 523 / NBRC 100496 / NCIMB 8023 / NCTC 12954 / NRRL B-1118 / 37Y).